Consider the following 506-residue polypeptide: 2-isopropylmalate synthase (506 aa).

Positions 4-266 (ILFMDTTLRD…QSSIILKEIK (263 aa)) constitute a Pyruvate carboxyltransferase domain. Positions 13, 201, 203, and 237 each coordinate Mn(2+). Positions 390 to 506 (NIKQLQVHFV…KLKALLTLVK (117 aa)) are regulatory domain.

It belongs to the alpha-IPM synthase/homocitrate synthase family. LeuA type 1 subfamily. In terms of assembly, homodimer. Requires Mn(2+) as cofactor.

The protein localises to the cytoplasm. The enzyme catalyses 3-methyl-2-oxobutanoate + acetyl-CoA + H2O = (2S)-2-isopropylmalate + CoA + H(+). It participates in amino-acid biosynthesis; L-leucine biosynthesis; L-leucine from 3-methyl-2-oxobutanoate: step 1/4. Its function is as follows. Catalyzes the condensation of the acetyl group of acetyl-CoA with 3-methyl-2-oxobutanoate (2-ketoisovalerate) to form 3-carboxy-3-hydroxy-4-methylpentanoate (2-isopropylmalate). The protein is 2-isopropylmalate synthase of Bacillus cytotoxicus (strain DSM 22905 / CIP 110041 / 391-98 / NVH 391-98).